A 1162-amino-acid polypeptide reads, in one-letter code: Glycerophosphocholine phosphodiesterase GDE1 (1162 aa).

One can recognise an SPX domain in the interval 1 to 155; sequence MKFGKTYVTH…TSILSQHSGV (155 aa). ANK repeat units follow at residues 346–375, 392–421, 423–452, 458–487, 492–521, and 525–554; these read YHRT…KWGL, EGLT…AQTL, CPNL…DVNY, RNET…NTEI, FGWT…SYDI, and SGWL…KLLL. In terms of domain architecture, GP-PDE spans 817 to 1146; that stretch reads TRVIGHRGLG…DSVLAVREGL (330 aa).

It belongs to the GDE1 family.

It is found in the cytoplasm. It carries out the reaction sn-glycerol 3-phosphocholine + H2O = sn-glycerol 3-phosphate + choline + H(+). Its function is as follows. Glycerophosphocholine glycerophosphodiesterase responsible for the hydrolysis of intracellular glycerophosphocholine into glycerol-phosphate and choline. The choline is used for phosphatidyl-choline synthesis. Required for utilization of glycerophosphocholine as phosphate source. C.albicans can utilize GroPCho through transport and intracellular hydrolysis or through extracellular hydrolysis. This is Glycerophosphocholine phosphodiesterase GDE1 from Candida albicans (strain SC5314 / ATCC MYA-2876) (Yeast).